The following is a 293-amino-acid chain: Movement protein BC1 (293 aa).

This sequence belongs to the begomovirus movement protein BC1 family. Binds to dimeric supercoiled plasmid DNA. Post-translationally, phosphorylated.

It is found in the host cell membrane. Its subcellular location is the host microsome membrane. The protein resides in the host endoplasmic reticulum membrane. In terms of biological role, transports viral genome to neighboring plant cells directly through plasmosdesmata, without any budding. The movement protein allows efficient cell to cell propagation, by bypassing the host cell wall barrier. Begomovirus genome is shuttled out of nucleus by Nuclear shuttle protein (NSP) and the movement protein transports the DNA-NSP complex to cell plasmodesmata and facilitates further movement across the cell wall. In Macroptilium lathyroides (Lima bean), this protein is Movement protein BC1.